The primary structure comprises 119 residues: Mitochondrial coiled-coil domain protein 1 (119 aa).

The N-terminal 24 residues, 1-24 (MVLPLPWLSRYHFLRLLLPSWSLA), are a transit peptide targeting the mitochondrion. The tract at residues 25–65 (PQGSHGCCSQNPKASMEEQTSSRGNGKMTSPPRGPGTHRTA) is disordered. Residues 31–52 (CCSQNPKASMEEQTSSRGNGKM) are compositionally biased toward polar residues. Residues 62 to 116 (HRTAELARAEELLEQQLELYQALLEGQEGAWEAQALVLKIQKLKEQMRRHQESLG) adopt a coiled-coil conformation.

Widely expressed. Expressed in adult and fetal liver, kidney and lung. Expressed in fetal brain. Weakly expressed in fetal spleen.

It localises to the mitochondrion. This is Mitochondrial coiled-coil domain protein 1 (MCCD1) from Homo sapiens (Human).